The chain runs to 821 residues: Fibroblast growth factor receptor 2 (821 aa).

An N-terminal signal peptide occupies residues 1 to 21 (MVSWGRFICLVVVTMATLSLA). The Extracellular portion of the chain corresponds to 22-377 (RPSFSLVEDT…EITASPDYLE (356 aa)). In terms of domain architecture, Ig-like C2-type 1 spans 25–125 (FSLVEDTTLE…ETWYFMVNVT (101 aa)). The cysteines at positions 62 and 107 are disulfide-linked. Asn-83 and Asn-123 each carry an N-linked (GlcNAc...) asparagine glycan. The segment covering 131 to 144 (GDDEDDTDGAEDFV) has biased composition (acidic residues). Residues 131 to 151 (GDDEDDTDGAEDFVSENSNNK) are disordered. Ig-like C2-type domains lie at 154 to 247 (PYWT…YHLD) and 256 to 358 (PILQ…AWLT). The tract at residues 161–178 (KMEKRLHAVPAANTVKFR) is heparin-binding. The cysteines at positions 179 and 231 are disulfide-linked. N-linked (GlcNAc...) asparagine glycosylation is found at Asn-228, Asn-241, Asn-265, Asn-297, Asn-318, and Asn-331. A disulfide bridge links Cys-278 with Cys-342. A helical membrane pass occupies residues 378 to 398 (IAIYCIGVFLIACMVVTVILC). Residues 399–821 (RMKNTTKKPD…YPHINGSVKT (423 aa)) lie on the Cytoplasmic side of the membrane. Tyr-466 carries the post-translational modification Phosphotyrosine; by autocatalysis. Positions 481–770 (LTLGKPLGEG…LTLTTNEEYL (290 aa)) constitute a Protein kinase domain. Residues 487–495 (LGEGCFGQV), Lys-517, 565–567 (EYA), and Asn-571 each bind ATP. Tyr-586 and Tyr-588 each carry phosphotyrosine; by autocatalysis. Asp-626 serves as the catalytic Proton acceptor. Phosphotyrosine; by autocatalysis occurs at positions 656, 657, and 769. Ser-780 carries the post-translational modification Phosphoserine.

This sequence belongs to the protein kinase superfamily. Tyr protein kinase family. Fibroblast growth factor receptor subfamily. Monomer. Homodimer after ligand binding. Interacts predominantly with FGF1 and FGF2, but can also interact with FGF3, FGF4, FGF6, FGF7, FGF8, FGF9, FGF10, FGF17, FGF18 and FGF22 (in vitro). Ligand specificity is determined by tissue-specific expression of isoforms, and differences in the third Ig-like domain are crucial for ligand specificity. Isoform 1 has high affinity for FGF1 and FGF2, but low affinity for FGF7. Isoform 3 has high affinity for FGF1 and FGF7, and has much higher affinity for FGF7 than isoform 1 (in vitro). Affinity for fibroblast growth factors (FGFs) is increased by heparan sulfate glycosaminoglycans that function as coreceptors. Likewise, KLB increases the affinity for FGF19 and FGF21. Interacts with PLCG1, GRB2 and PAK4. Interacts with FLRT2. In terms of processing, autophosphorylated. Binding of FGF family members together with heparan sulfate proteoglycan or heparin promotes receptor dimerization and autophosphorylation on several tyrosine residues. Autophosphorylation occurs in trans between the two FGFR molecules present in the dimer. Phosphorylation at Tyr-769 is essential for interaction with PLCG1. N-glycosylated in the endoplasmic reticulum. The N-glycan chains undergo further maturation to an Endo H-resistant form in the Golgi apparatus. Post-translationally, ubiquitinated. FGFR2 is rapidly ubiquitinated after autophosphorylation, leading to internalization and degradation. Subject to degradation both in lysosomes and by the proteasome.

Its subcellular location is the cell membrane. It localises to the golgi apparatus. It is found in the cytoplasmic vesicle. The protein resides in the secreted. It carries out the reaction L-tyrosyl-[protein] + ATP = O-phospho-L-tyrosyl-[protein] + ADP + H(+). Present in an inactive conformation in the absence of bound ligand. Ligand binding leads to dimerization and activation by autophosphorylation on tyrosine residues. Inhibited by ARQ 523 and ARQ 069; these compounds maintain the kinase in an inactive conformation and inhibit autophosphorylation. Functionally, tyrosine-protein kinase that acts as a cell-surface receptor for fibroblast growth factors and plays an essential role in the regulation of cell proliferation, differentiation, migration and apoptosis, and in the regulation of embryonic development. Required for normal embryonic patterning, trophoblast function, limb bud development, lung morphogenesis, osteogenesis and skin development. Plays an essential role in the regulation of osteoblast differentiation, proliferation and apoptosis, and is required for normal skeleton development. Promotes cell proliferation in keratinocytes and immature osteoblasts, but promotes apoptosis in differentiated osteoblasts. Phosphorylates PLCG1, FRS2 and PAK4. Ligand binding leads to the activation of several signaling cascades. Activation of PLCG1 leads to the production of the cellular signaling molecules diacylglycerol and inositol 1,4,5-trisphosphate. Phosphorylation of FRS2 triggers recruitment of GRB2, GAB1, PIK3R1 and SOS1, and mediates activation of RAS, MAPK1/ERK2, MAPK3/ERK1 and the MAP kinase signaling pathway, as well as of the AKT1 signaling pathway. FGFR2 signaling is down-regulated by ubiquitination, internalization and degradation. Mutations that lead to constitutive kinase activation or impair normal FGFR2 maturation, internalization and degradation lead to aberrant signaling. Over-expressed FGFR2 promotes activation of STAT1. The protein is Fibroblast growth factor receptor 2 (FGFR2) of Homo sapiens (Human).